The following is a 381-amino-acid chain: Queuine tRNA-ribosyltransferase (381 aa).

The active-site Proton acceptor is the Asp-96. Substrate-binding positions include 96–100 (DSGGF), Asp-150, Gln-193, and Gly-220. The interval 251–257 (GVGSPDA) is RNA binding. The active-site Nucleophile is Asp-270. The RNA binding; important for wobble base 34 recognition stretch occupies residues 275-279 (TRIAR). The Zn(2+) site is built by Cys-308, Cys-310, Cys-313, and His-339.

The protein belongs to the queuine tRNA-ribosyltransferase family. As to quaternary structure, homodimer. Within each dimer, one monomer is responsible for RNA recognition and catalysis, while the other monomer binds to the replacement base PreQ1. Zn(2+) is required as a cofactor.

The enzyme catalyses 7-aminomethyl-7-carbaguanine + guanosine(34) in tRNA = 7-aminomethyl-7-carbaguanosine(34) in tRNA + guanine. Its pathway is tRNA modification; tRNA-queuosine biosynthesis. Catalyzes the base-exchange of a guanine (G) residue with the queuine precursor 7-aminomethyl-7-deazaguanine (PreQ1) at position 34 (anticodon wobble position) in tRNAs with GU(N) anticodons (tRNA-Asp, -Asn, -His and -Tyr). Catalysis occurs through a double-displacement mechanism. The nucleophile active site attacks the C1' of nucleotide 34 to detach the guanine base from the RNA, forming a covalent enzyme-RNA intermediate. The proton acceptor active site deprotonates the incoming PreQ1, allowing a nucleophilic attack on the C1' of the ribose to form the product. After dissociation, two additional enzymatic reactions on the tRNA convert PreQ1 to queuine (Q), resulting in the hypermodified nucleoside queuosine (7-(((4,5-cis-dihydroxy-2-cyclopenten-1-yl)amino)methyl)-7-deazaguanosine). The sequence is that of Queuine tRNA-ribosyltransferase from Bacillus velezensis (strain DSM 23117 / BGSC 10A6 / LMG 26770 / FZB42) (Bacillus amyloliquefaciens subsp. plantarum).